The following is a 301-amino-acid chain: Methionyl-tRNA formyltransferase (301 aa).

109 to 112 (SLLP) contacts (6S)-5,6,7,8-tetrahydrofolate.

It belongs to the Fmt family.

The catalysed reaction is L-methionyl-tRNA(fMet) + (6R)-10-formyltetrahydrofolate = N-formyl-L-methionyl-tRNA(fMet) + (6S)-5,6,7,8-tetrahydrofolate + H(+). Its function is as follows. Attaches a formyl group to the free amino group of methionyl-tRNA(fMet). The formyl group appears to play a dual role in the initiator identity of N-formylmethionyl-tRNA by promoting its recognition by IF2 and preventing the misappropriation of this tRNA by the elongation apparatus. The chain is Methionyl-tRNA formyltransferase from Anaplasma marginale (strain St. Maries).